The following is a 950-amino-acid chain: Synaptotagmin-like protein 2 (950 aa).

The RabBD domain occupies 1 to 57 (MIDLSFLTEEEQDAILKVLQRDAALKRAEEERVRHLPEKIKDDQQLKNMSGQWFYEA). Disordered stretches follow at residues 78-98 (RKKL…AKES), 116-289 (VEEP…ETLR), and 361-620 (ESDQ…SSSG). Residues 87 to 97 (QNKDTAMRAKE) show a composition bias toward basic and acidic residues. Composition is skewed to polar residues over residues 140–150 (IDMSQESTRTP) and 173–183 (LQQTKPEQSKT). Over residues 193–205 (KEGELSESKEKSS) the composition is skewed to basic and acidic residues. The span at 219–230 (QTVSTEPENASH) shows a compositional bias: polar residues. Over residues 246–264 (NDLEKDDNQSFPRQRRDSL) the composition is skewed to basic and acidic residues. Polar residues predominate over residues 434-445 (VESSSVINGQQE). Composition is skewed to basic and acidic residues over residues 479–502 (HSFR…LERR) and 531–544 (ELVR…KADQ). Polar residues predominate over residues 557 to 567 (TVPSLPDNQFS). A compositionally biased stretch (low complexity) spans 608 to 620 (SPSSLTNLSSSSG). C2 domains lie at 644-769 (VKGS…LKWY) and 784-913 (NRGE…VDWM).

Monomer. Binds NRXN1. Binds RAB27A that has been activated by GTP-binding. Interacts with RAB27B. Post-translationally, isoform 1 is highly susceptible to proteolytic degradation and is stabilized by the interaction with RAB27A. In terms of tissue distribution, highly expressed in brain, lung, kidney, testis and in embryos after day 7. Detected at lower levels in skeletal muscle. Expressed in pancreatic alpha cells. Isoform 6 is highly expressed in brain, but not detectable in the other tissues tested. Isoform 1 is expressed abundantly in the stomach and is predominantly localized at the apical region of gastric-surface mucus cells. Isoform 11 is expressed in cytotoxic T-lymphocytes (CTL).

The protein resides in the melanosome membrane. Its subcellular location is the cell membrane. Isoform 11 acts as a RAB27A effector protein and plays a role in cytotoxic granule exocytosis in lymphocytes. Required for cytotoxic granule docking at the immunologic synapse. Isoform 1 may play a role in melanosome transport and vesicle trafficking. It controls melanosome distribution in the cell periphery and regulates melanocyte morphology. Isoform 1 acts as a positive mediator of mucus secretion by the surface mucus cells of the stomach. Mediates basal mucus secretion by gastric surface cells by promoting the proper granule biognesis and docking of mucus granules with the apical plasma membrane. This is Synaptotagmin-like protein 2 (Sytl2) from Mus musculus (Mouse).